We begin with the raw amino-acid sequence, 128 residues long: Mu-like prophage FluMu protein gp35 (128 aa).

A disordered region spans residues 53–87; that stretch reads TETGSQEGGEGLSKEPAGSDEQKQLRADPPSTDLN.

To phage Mu protein gp35. In terms of assembly, monomer.

The protein is Mu-like prophage FluMu protein gp35 of Haemophilus influenzae (strain ATCC 51907 / DSM 11121 / KW20 / Rd).